The following is a 563-amino-acid chain: MELVIGLLVILLALFAAGYFFRKKIYTEIDRLESWKIEILNRSIVEEMSKIKHLKMTGETEEFFERWREEWDEIVTAHLPKVEELLYDAEENADKYRFKKANQVLVHIDDLLTAAESNIEGILREISDLVTSEEKSRGEIEQVRERYSKARKNLLAYSHLYGELYNSLETDLDEIWSGIKEFEEETESGNYIKARKVLLEQDRRLDQLQTYIDDVPKLLADCKQTVPNQIAKLKDGYREMTEKGYKLEHIQIEKELDTLTNQVKRAENALLEELDVDEASAILQLIDETIQSMYEQLEGEVEAGQSVLSKMPELIIAYEKLEEEKDRTKTETELVKESYQLTAGEIGRQHAFEKQLETIGRLLEQAREKLDGEHVAYSLLIEEVEAIEKQLEEAQKEHAEYRENLQALRKEELQARETLMHLRKTISDTARMLQKSNVPGIPEQVKDKLETANHHIEETVSQLEELPLNMEEAAKHLDEAEKVVEEVSEEAEDLVIQVKLIERIIQYGNRFRSQNHILSEQLKEAERLFYAYSYNEAYEMAADAVEKAAPGAVKKIKADQSAS.

Residues 1 to 2 lie on the Extracellular side of the membrane; that stretch reads ME. The helical transmembrane segment at 3–21 threads the bilayer; that stretch reads LVIGLLVILLALFAAGYFF. Topologically, residues 22–563 are cytoplasmic; the sequence is RKKIYTEIDR…KKIKADQSAS (542 aa). 3 coiled-coil regions span residues 133 to 159, 243 to 276, and 309 to 529; these read EEKS…AYSH, KGYK…ELDV, and SKMP…ERLF.

It belongs to the EzrA family.

It localises to the cell membrane. Functionally, negative regulator of FtsZ ring formation; modulates the frequency and position of FtsZ ring formation. Inhibits FtsZ ring formation at polar sites. Interacts either with FtsZ or with one of its binding partners to promote depolymerization. The protein is Septation ring formation regulator EzrA of Bacillus velezensis (strain DSM 23117 / BGSC 10A6 / LMG 26770 / FZB42) (Bacillus amyloliquefaciens subsp. plantarum).